We begin with the raw amino-acid sequence, 218 residues long: 3-dehydroquinate dehydratase (218 aa).

Residues 29-31 and Arg-56 each bind 3-dehydroquinate; that span reads EFR. The active-site Proton donor/acceptor is the His-116. Lys-142 serves as the catalytic Schiff-base intermediate with substrate. Arg-180, Ser-200, and Gln-204 together coordinate 3-dehydroquinate.

This sequence belongs to the type-I 3-dehydroquinase family. In terms of assembly, homodimer.

It catalyses the reaction 3-dehydroquinate = 3-dehydroshikimate + H2O. Its pathway is metabolic intermediate biosynthesis; chorismate biosynthesis; chorismate from D-erythrose 4-phosphate and phosphoenolpyruvate: step 3/7. Functionally, involved in the third step of the chorismate pathway, which leads to the biosynthesis of aromatic amino acids. Catalyzes the cis-dehydration of 3-dehydroquinate (DHQ) and introduces the first double bond of the aromatic ring to yield 3-dehydroshikimate. The protein is 3-dehydroquinate dehydratase of Methanococcus maripaludis (strain C5 / ATCC BAA-1333).